The primary structure comprises 1172 residues: Putative cadmium/zinc-transporting ATPase HMA4 (1172 aa).

Over 1–93 (MALQNKEEEK…VRVNGETSFK (93 aa)) the chain is Cytoplasmic. The HMA domain occupies 17–83 (QKSYFDVLGI…ALNEARLEAN (67 aa)). A helical transmembrane segment spans residues 94 to 115 (NKWPSPFAVVSGLLLLLSFLKF). Topologically, residues 116 to 118 (VYS) are extracellular. The helical transmembrane segment at 119-138 (PLRWLAVAAVAAGIYPILAK) threads the bilayer. Topologically, residues 139–145 (AFASIKR) are cytoplasmic. The helical transmembrane segment at 146 to 166 (PRIDINILVIITVIATLAMQD) threads the bilayer. Phe-167 is a topological domain (extracellular). Residues 168–188 (MEAAAVVFLFTISDWLETRAS) form a helical membrane-spanning segment. Over 189–314 (YKATSVMQSL…KTKSQRLIDK (126 aa)) the chain is Cytoplasmic. The helical transmembrane segment at 315–337 (CSQYYTPAIILVSACVAIVPVIM) threads the bilayer. Residues 338–345 (KVHNLKHW) lie on the Extracellular side of the membrane. A helical membrane pass occupies residues 346–363 (FHLALVVLVSGCPCGLIL). The Cytoplasmic segment spans residues 364-656 (STPVATFCAL…KLARRARRKV (293 aa)). Asp-401 serves as the catalytic 4-aspartylphosphate intermediate. The Mg(2+) site is built by Asp-601 and Asp-605. A helical membrane pass occupies residues 657-676 (VENVCLSIILKAGILALAFA). The Extracellular segment spans residues 677-680 (GHPL). Residues 681–700 (IWAAVLVDVGTCLLVIFNSM) form a helical membrane-spanning segment. The Cytoplasmic portion of the chain corresponds to 701–1172 (LLLREKKKIG…HHHHHHHVSA (472 aa)).

It belongs to the cation transport ATPase (P-type) (TC 3.A.3) family. Type IB subfamily.

The protein localises to the membrane. It catalyses the reaction Zn(2+)(in) + ATP + H2O = Zn(2+)(out) + ADP + phosphate + H(+). The catalysed reaction is Cd(2+)(in) + ATP + H2O = Cd(2+)(out) + ADP + phosphate + H(+). Its function is as follows. Involved in cadmium/zinc transport. The polypeptide is Putative cadmium/zinc-transporting ATPase HMA4 (HMA4) (Arabidopsis thaliana (Mouse-ear cress)).